We begin with the raw amino-acid sequence, 617 residues long: Secretogranin-2 (617 aa).

Positions 1–27 (MAEAKTHWLGAALSLIPLIFLISGAEA) are cleaved as a signal peptide. The propeptide occupies 28–30 (ASF). Positions 120 to 143 (QAENEPQSAPKENKPYALNSEKNF) are disordered. Tyr-151 is subject to Sulfotyrosine. The residue at position 174 (Ser-174) is a Phosphoserine. The interval 182 to 200 (TNEIVEEQYTPQSLATLES) is O-glycosylated at one site. Basic and acidic residues-rich tracts occupy residues 257–284 (IESQ…EMKR) and 293–302 (EDLRKESKDQ). The tract at residues 257–302 (IESQTQEEVRDSKENIEKNEQINDEMKRSGQLGIQEEDLRKESKDQ) is disordered. Ser-268 bears the Phosphoserine mark. Ser-432, Ser-532, Ser-555, and Ser-556 each carry phosphoserine. Residues 552–583 (NQGSSQETDKLAPVSKRFPVGPPKNDDTPNRQ) form a disordered region.

The protein belongs to the chromogranin/secretogranin protein family. Interacts with Secretogranin III/SCG3. In terms of processing, O-glycosylated.

Its subcellular location is the secreted. In terms of biological role, neuroendocrine protein of the granin family that regulates the biogenesis of secretory granules. The protein is Secretogranin-2 (SCG2) of Homo sapiens (Human).